Consider the following 349-residue polypeptide: Very-long-chain 3-oxoacyl-CoA reductase (349 aa).

A helical membrane pass occupies residues 29–49 (AASLVFATGGLFLLSRGLSFL). The NADP(+) site is built by Leu-74, Asp-129, Asp-137, Asn-156, Tyr-223, Lys-227, Val-256, and Ser-258. Tyr-223 (proton donor) is an active-site residue. The active-site Lowers pKa of active site Tyr is Lys-227.

Belongs to the short-chain dehydrogenases/reductases (SDR) family.

The protein resides in the endoplasmic reticulum membrane. It carries out the reaction a very-long-chain (3R)-3-hydroxyacyl-CoA + NADP(+) = a very-long-chain 3-oxoacyl-CoA + NADPH + H(+). It functions in the pathway lipid metabolism; fatty acid biosynthesis. In terms of biological role, component of the microsomal membrane bound fatty acid elongation system, which produces the 26-carbon very long-chain fatty acids (VLCFA) from palmitate. Catalyzes the reduction of the 3-ketoacyl-CoA intermediate that is formed in each cycle of fatty acid elongation. VLCFAs serve as precursors for ceramide and sphingolipids. This chain is Very-long-chain 3-oxoacyl-CoA reductase, found in Coccidioides immitis (strain RS) (Valley fever fungus).